Here is a 716-residue protein sequence, read N- to C-terminus: Fatty acid oxidation complex subunit alpha (716 aa).

The enoyl-CoA hydratase/isomerase stretch occupies residues Met-1 to Ala-189. Substrate is bound at residue Asp-296. The tract at residues Gln-311–Ala-716 is 3-hydroxyacyl-CoA dehydrogenase. NAD(+)-binding positions include Met-324, Asp-343, Val-400–Glu-402, Lys-407, and Ser-429. The active-site For 3-hydroxyacyl-CoA dehydrogenase activity is the His-450. Asn-453 is an NAD(+) binding site. Substrate is bound by residues Asn-500 and Tyr-660.

In the N-terminal section; belongs to the enoyl-CoA hydratase/isomerase family. The protein in the C-terminal section; belongs to the 3-hydroxyacyl-CoA dehydrogenase family. As to quaternary structure, heterotetramer of two alpha chains (FadB) and two beta chains (FadA).

The catalysed reaction is a (3S)-3-hydroxyacyl-CoA + NAD(+) = a 3-oxoacyl-CoA + NADH + H(+). The enzyme catalyses a (3S)-3-hydroxyacyl-CoA = a (2E)-enoyl-CoA + H2O. It catalyses the reaction a 4-saturated-(3S)-3-hydroxyacyl-CoA = a (3E)-enoyl-CoA + H2O. It carries out the reaction (3S)-3-hydroxybutanoyl-CoA = (3R)-3-hydroxybutanoyl-CoA. The catalysed reaction is a (3Z)-enoyl-CoA = a 4-saturated (2E)-enoyl-CoA. The enzyme catalyses a (3E)-enoyl-CoA = a 4-saturated (2E)-enoyl-CoA. Its pathway is lipid metabolism; fatty acid beta-oxidation. Functionally, involved in the aerobic and anaerobic degradation of long-chain fatty acids via beta-oxidation cycle. Catalyzes the formation of 3-oxoacyl-CoA from enoyl-CoA via L-3-hydroxyacyl-CoA. It can also use D-3-hydroxyacyl-CoA and cis-3-enoyl-CoA as substrate. This Shewanella loihica (strain ATCC BAA-1088 / PV-4) protein is Fatty acid oxidation complex subunit alpha.